The sequence spans 98 residues: NADH-ubiquinone oxidoreductase chain 4L (98 aa).

3 helical membrane-spanning segments follow: residues 1 to 21 (MSMV…GLLI), 30 to 50 (LLCL…TILT), and 61 to 81 (IILL…LVMI).

This sequence belongs to the complex I subunit 4L family. As to quaternary structure, core subunit of respiratory chain NADH dehydrogenase (Complex I) which is composed of 45 different subunits.

It localises to the mitochondrion inner membrane. The enzyme catalyses a ubiquinone + NADH + 5 H(+)(in) = a ubiquinol + NAD(+) + 4 H(+)(out). Its function is as follows. Core subunit of the mitochondrial membrane respiratory chain NADH dehydrogenase (Complex I) which catalyzes electron transfer from NADH through the respiratory chain, using ubiquinone as an electron acceptor. Part of the enzyme membrane arm which is embedded in the lipid bilayer and involved in proton translocation. This chain is NADH-ubiquinone oxidoreductase chain 4L (MT-ND4L), found in Martes americana (American marten).